The primary structure comprises 484 residues: Cobyric acid synthase (484 aa).

The GATase cobBQ-type domain maps to 251–438; sequence ALKIAVPVLP…LHGLFGSDAY (188 aa). Cys-333 functions as the Nucleophile in the catalytic mechanism. The active site involves His-430.

This sequence belongs to the CobB/CobQ family. CobQ subfamily.

It functions in the pathway cofactor biosynthesis; adenosylcobalamin biosynthesis. Its function is as follows. Catalyzes amidations at positions B, D, E, and G on adenosylcobyrinic A,C-diamide. NH(2) groups are provided by glutamine, and one molecule of ATP is hydrogenolyzed for each amidation. This is Cobyric acid synthase from Rhizobium leguminosarum bv. trifolii (strain WSM2304).